A 125-amino-acid polypeptide reads, in one-letter code: MORF4 family-associated protein 1 (125 aa).

A disordered region spans residues 76–99 (ESALNHLQGAGGAEPRGPRAEKAD). A coiled-coil region spans residues 94–124 (RAEKADEKAQEMAKMAEMLVQLVRRIEKSES).

It belongs to the MORF4 family-associated protein family. Found in a complex composed of MORF4L1, MRFAP1 and RB1. Interacts via its N-terminus with MORF4L1. Interacts with CSTB and MORF4L2.

Its subcellular location is the nucleus. It localises to the cytoplasm. It is found in the perinuclear region. The protein is MORF4 family-associated protein 1 of Rattus norvegicus (Rat).